Here is a 478-residue protein sequence, read N- to C-terminus: ATP-dependent RNA helicase DDX19A (478 aa).

Ala-2 carries the N-acetylalanine modification. The interval 2-299 is N-terminal lobe; sequence ATDSWALAVD…DPNIIKLKRE (298 aa). Residue Lys-26 forms a Glycyl lysine isopeptide (Lys-Gly) (interchain with G-Cter in SUMO1); alternate linkage. Lys-26 is covalently cross-linked (Glycyl lysine isopeptide (Lys-Gly) (interchain with G-Cter in SUMO2); alternate). Residues 34-53 form a disordered region; the sequence is TNGVIKTSTTAEKTEEEEKE. A Phosphothreonine modification is found at Thr-42. The interval 54 to 67 is N-terminal helix; it reads DRAAQSLLNKLIRS. The short motif at 91–119 is the Q motif element; it reads KSFEELRLKPQLLQGVYAMGFNRPSKIQE. ATP-binding positions include Gln-118 and 137–144; that span reads SQSGTGKT. Residues 124–294 form the Helicase ATP-binding domain; sequence MMLAEPPQNL…QKVVPDPNII (171 aa). Positions 241 to 244 match the DEAD box motif; that stretch reads DEAD. The C-terminal lobe stretch occupies residues 300-478; the sequence is EETLDTIKQY…DLDEIEKIAN (179 aa). In terms of domain architecture, Helicase C-terminal spans 305–473; sequence TIKQYYVLCN…RLDTDDLDEI (169 aa). ATP is bound by residues Arg-428 and Arg-431.

The protein belongs to the DEAD box helicase family. DDX19/DBP5 subfamily. In terms of tissue distribution, found in testis, heart, brain, liver, skeletal muscle, and kidney.

The protein localises to the cytoplasm. It localises to the nucleus. It is found in the nucleoplasm. It catalyses the reaction ATP + H2O = ADP + phosphate + H(+). Functionally, ATP-dependent RNA helicase involved in mRNA export from the nucleus. Rather than unwinding RNA duplexes, DDX19 functions as a remodeler of ribonucleoprotein particles, whereby proteins bound to nuclear mRNA are dissociated and replaced by cytoplasmic mRNA binding proteins. This Mus musculus (Mouse) protein is ATP-dependent RNA helicase DDX19A (Ddx19a).